The following is a 130-amino-acid chain: Protein ApaG (130 aa).

An ApaG domain is found at 3–127; sequence SQTTRDIEVT…FSLDSPHEKP (125 aa).

In Paramagnetospirillum magneticum (strain ATCC 700264 / AMB-1) (Magnetospirillum magneticum), this protein is Protein ApaG.